We begin with the raw amino-acid sequence, 353 residues long: Outer membrane protein P5 (353 aa).

A signal peptide spans 1-21 (MKKTAIALVVAGLAAASVAQA). 8 consecutive transmembrane segments (beta stranded) span residues 27–37 (TFYAGVKAGQA), 58–69 (SFTYGVFGGYQI), 77–85 (LAVELGYDD), 104–115 (HGTHLSLKGSYE), 120–128 (LDVYGKAGV), 158–167 (GLFAVGAEYA), 172–179 (LAVRLEYQ), and 205–213 (SINAGISYR). In terms of domain architecture, OmpA-like spans 227-353 (VVSKTFSLNS…RVEIAVNGTK (127 aa)). C326 and C338 form a disulfide bridge.

It belongs to the outer membrane OOP (TC 1.B.6) superfamily. OmpA family. As to quaternary structure, monomer and homodimer.

The protein resides in the cell outer membrane. With TolR probably plays a role in maintaining the position of the peptidoglycan cell wall in the periplasm. Acts as a porin with low permeability that allows slow penetration of small solutes; an internal gate slows down solute passage. Its function is as follows. Reconstitution in planar bilayers with lithium dodecyl sulfate-solublized P5 yields narrow pores (58 pS conductance) with a low probability of opening, whereas n-octyl-bD-glucopyranoside-solubilized P5 forms large pores (1.1 nS conductance) with high open probability. The large pore easily converts to the smaller pore at room temperature; at 42 degrees Celsius the smaller pore converts to the larger one. In Haemophilus influenzae (strain ATCC 51907 / DSM 11121 / KW20 / Rd), this protein is Outer membrane protein P5.